A 543-amino-acid chain; its full sequence is Steroid receptor seven-up, isoforms B/C (543 aa).

The segment at 38–191 is disordered; that stretch reads PPHSAWHEPP…HSQSSNSGSQ (154 aa). Residues 56-68 show a composition bias toward low complexity; it reads AASAGPGTTTGSV. Polar residues predominate over residues 83–101; that stretch reads QQSAVIKQDLSCPSLNQAG. Residues 122-141 show a composition bias toward gly residues; the sequence is GSAGGHHSGSGSGSGSGVNP. A compositionally biased stretch (polar residues) spans 158 to 170; the sequence is MLTSIKGQPTGCG. The segment covering 171–191 has biased composition (low complexity); sequence STTPSSQANSSHSQSSNSGSQ. Residues 197–272 constitute a DNA-binding region (nuclear receptor); the sequence is NIECVVCGDK…MGMRREAVQR (76 aa). NR C4-type zinc fingers lie at residues 200–220 and 236–260; these read CVVCGDKSSGKHYGQFTCEGC and CRGSRNCPIDQHHRNQCQYCRLKKC. An NR LBD domain is found at 307–532; the sequence is YLSSYISLLL…TLIRDMLLSG (226 aa).

Belongs to the nuclear hormone receptor family. NR2 subfamily. As to expression, expressed in several embryonic tissues; dorsal vessel, oenocyte and fat body. CNS expression is dynamic and confined to temporally restricted subsections of the NB lineage; expressed in many NB and GMCs, but only a small number of neurons.

The protein resides in the nucleus. Functionally, receptor that is required in photoreceptors R1, R3, R4 and R6 during eye development; generation of the ganglion mother cell-2 (GMC-2) fate in the nb7-3 lineage, coinciding with the transition in the expression of HB to KR in the neuroblasts (NBs). The protein is Steroid receptor seven-up, isoforms B/C (svp) of Drosophila melanogaster (Fruit fly).